A 161-amino-acid polypeptide reads, in one-letter code: Bifurcating [FeFe] hydrogenase gamma subunit (161 aa).

Residues cysteine 78, cysteine 83, cysteine 119, and cysteine 123 each contribute to the [2Fe-2S] cluster site.

Belongs to the complex I 24 kDa subunit family. As to quaternary structure, heterotrimer composed of HydA (alpha subunit), HydB (beta subunit) and HydC (gamma subunit). Near neutral and acidic pH conditions favor oligomerization of the heterotrimeric holoenzyme. Requires [2Fe-2S] cluster as cofactor.

It localises to the cytoplasm. It catalyses the reaction 2 H2 + 2 oxidized [2Fe-2S]-[ferredoxin] + NAD(+) = 2 reduced [2Fe-2S]-[ferredoxin] + NADH + 3 H(+). Catalyzes the oxidation of the physiological electron carriers NADH and reduced ferredoxin, coupled to the production of H(2). Acts as a bifurcating [FeFe] hydrogenase, which uses the exergonic oxidation of reduced ferredoxin to drive the unfavorable oxidation of NADH to produce H(2). The gamma subunit might be the site where reduced ferredoxin is oxidized. The polypeptide is Bifurcating [FeFe] hydrogenase gamma subunit (Thermotoga maritima (strain ATCC 43589 / DSM 3109 / JCM 10099 / NBRC 100826 / MSB8)).